The sequence spans 137 residues: Large-conductance mechanosensitive channel (137 aa).

2 helical membrane-spanning segments follow: residues 10–30 (FAMRGNVVDLAVGVIIGAAFG) and 76–96 (GVFIQNVFDFVIVAFAIFVAI).

This sequence belongs to the MscL family. As to quaternary structure, homopentamer.

Its subcellular location is the cell inner membrane. Channel that opens in response to stretch forces in the membrane lipid bilayer. May participate in the regulation of osmotic pressure changes within the cell. In Salmonella choleraesuis (strain SC-B67), this protein is Large-conductance mechanosensitive channel.